A 448-amino-acid polypeptide reads, in one-letter code: Enolase (448 aa).

Q164 contributes to the (2R)-2-phosphoglycerate binding site. E206 functions as the Proton donor in the catalytic mechanism. Residues D243, E289, and D316 each contribute to the Mg(2+) site. Positions 341, 370, 371, and 392 each coordinate (2R)-2-phosphoglycerate. K341 (proton acceptor) is an active-site residue.

This sequence belongs to the enolase family. The cofactor is Mg(2+).

Its subcellular location is the cytoplasm. It localises to the secreted. The protein localises to the cell surface. It catalyses the reaction (2R)-2-phosphoglycerate = phosphoenolpyruvate + H2O. Its pathway is carbohydrate degradation; glycolysis; pyruvate from D-glyceraldehyde 3-phosphate: step 4/5. Catalyzes the reversible conversion of 2-phosphoglycerate (2-PG) into phosphoenolpyruvate (PEP). It is essential for the degradation of carbohydrates via glycolysis. This chain is Enolase, found in Oenococcus oeni (strain ATCC BAA-331 / PSU-1).